The sequence spans 389 residues: S-adenosylmethionine synthase (389 aa).

Residue histidine 18 coordinates ATP. Mg(2+) is bound at residue aspartate 20. Glutamate 46 is a binding site for K(+). L-methionine is bound by residues glutamate 59 and glutamine 103. Residues 103 to 113 form a flexible loop region; sequence QSADIAMGVDS. Residues 168 to 170, aspartate 244, 250 to 251, alanine 267, and lysine 271 contribute to the ATP site; these read DSK and RK. Aspartate 244 provides a ligand contact to L-methionine. Lysine 275 lines the L-methionine pocket.

It belongs to the AdoMet synthase family. Homotetramer; dimer of dimers. Mg(2+) is required as a cofactor. It depends on K(+) as a cofactor.

It localises to the cytoplasm. The enzyme catalyses L-methionine + ATP + H2O = S-adenosyl-L-methionine + phosphate + diphosphate. The protein operates within amino-acid biosynthesis; S-adenosyl-L-methionine biosynthesis; S-adenosyl-L-methionine from L-methionine: step 1/1. Its function is as follows. Catalyzes the formation of S-adenosylmethionine (AdoMet) from methionine and ATP. The overall synthetic reaction is composed of two sequential steps, AdoMet formation and the subsequent tripolyphosphate hydrolysis which occurs prior to release of AdoMet from the enzyme. This Pelagibacter ubique (strain HTCC1062) protein is S-adenosylmethionine synthase.